The sequence spans 626 residues: UvrABC system protein C (626 aa).

Residues 20-97 (ECSGVYKMLD…IKKFQPKFNI (78 aa)) enclose the GIY-YIG domain. The region spanning 207 to 242 (IALQANLSKKMQELSSQMRFEEAAEIRDRIKALSYV) is the UVR domain.

The protein belongs to the UvrC family. Interacts with UvrB in an incision complex.

It localises to the cytoplasm. The UvrABC repair system catalyzes the recognition and processing of DNA lesions. UvrC both incises the 5' and 3' sides of the lesion. The N-terminal half is responsible for the 3' incision and the C-terminal half is responsible for the 5' incision. The sequence is that of UvrABC system protein C from Rickettsia prowazekii (strain Madrid E).